The chain runs to 63 residues: Small ribosomal subunit protein eS31 (63 aa).

Residues Cys31, Cys34, Cys50, and Cys53 each contribute to the Zn(2+) site. The segment at 31-53 (CPRCGSIMAHHMKPVERWACGKC) adopts a C4-type zinc-finger fold.

This sequence belongs to the eukaryotic ribosomal protein eS31 family. As to quaternary structure, part of the 30S ribosomal subunit. Requires Zn(2+) as cofactor.

The sequence is that of Small ribosomal subunit protein eS31 from Sulfurisphaera tokodaii (strain DSM 16993 / JCM 10545 / NBRC 100140 / 7) (Sulfolobus tokodaii).